The following is a 272-amino-acid chain: Alkaline ceramidase (272 aa).

2 helical membrane-spanning segments follow: residues 34 to 54 (FANT…IMLL) and 61 to 81 (VNGG…ASTY). Position 83 (H83) interacts with Zn(2+). A run of 4 helical transmembrane segments spans residues 96-116 (LSLV…MKWF), 124-144 (LTLV…LCFL), 148-168 (LNAI…NYEG), and 183-203 (ILAL…LCDF). Zn(2+) is bound by residues H213 and H217. The helical transmembrane segment at 214–234 (ALFHLLAGLAGYTIFIMFSMI) threads the bilayer. N256 carries an N-linked (GlcNAc...) asparagine glycan.

It belongs to the alkaline ceramidase family. Zn(2+) serves as cofactor.

The protein resides in the membrane. The catalysed reaction is an N-acyl-sphingoid base + H2O = a sphingoid base + a fatty acid. The enzyme catalyses an N-acylsphing-4-enine + H2O = sphing-4-enine + a fatty acid. It catalyses the reaction an N-acyl-15-methylhexadecasphing-4-enine + H2O = 15-methylhexadecasphing-4-enine + a fatty acid. It participates in lipid metabolism; sphingolipid metabolism. Functionally, hydrolyzes the sphingolipid ceramide into sphingoid base and free fatty acid. C.elegans contain specific sphingoid bases, which are unique or different in structure compared to the sphingoid bases found in other animals. Two examples of these distinctive compounds are: 15-methylhexadecasphinganine and 15-methylhexadecasphing-4-enine. The sequence is that of Alkaline ceramidase from Caenorhabditis elegans.